Reading from the N-terminus, the 86-residue chain is Acyl carrier protein (86 aa).

One can recognise a Carrier domain in the interval 2–82 (ATVFERVKKV…AVVDYLKSKG (81 aa)). Position 37 is an O-(pantetheine 4'-phosphoryl)serine (Ser-37).

It belongs to the acyl carrier protein (ACP) family. In terms of processing, 4'-phosphopantetheine is transferred from CoA to a specific serine of apo-ACP by AcpS. This modification is essential for activity because fatty acids are bound in thioester linkage to the sulfhydryl of the prosthetic group.

The protein resides in the cytoplasm. Its pathway is lipid metabolism; fatty acid biosynthesis. Functionally, carrier of the growing fatty acid chain in fatty acid biosynthesis. This is Acyl carrier protein from Dehalococcoides mccartyi (strain ATCC BAA-2100 / JCM 16839 / KCTC 5957 / BAV1).